A 267-amino-acid chain; its full sequence is Formamidopyrimidine-DNA glycosylase (267 aa).

Pro-2 functions as the Schiff-base intermediate with DNA in the catalytic mechanism. Glu-3 acts as the Proton donor in catalysis. Lys-58 serves as the catalytic Proton donor; for beta-elimination activity. The DNA site is built by His-91, Arg-110, and Arg-152. An FPG-type zinc finger spans residues 233–267 (DVYGRGTDACTRCGGALEEIRLGNRSTVFCPRCQT). The active-site Proton donor; for delta-elimination activity is the Arg-257.

It belongs to the FPG family. Monomer. Requires Zn(2+) as cofactor.

It catalyses the reaction Hydrolysis of DNA containing ring-opened 7-methylguanine residues, releasing 2,6-diamino-4-hydroxy-5-(N-methyl)formamidopyrimidine.. It carries out the reaction 2'-deoxyribonucleotide-(2'-deoxyribose 5'-phosphate)-2'-deoxyribonucleotide-DNA = a 3'-end 2'-deoxyribonucleotide-(2,3-dehydro-2,3-deoxyribose 5'-phosphate)-DNA + a 5'-end 5'-phospho-2'-deoxyribonucleoside-DNA + H(+). Functionally, involved in base excision repair of DNA damaged by oxidation or by mutagenic agents. Acts as a DNA glycosylase that recognizes and removes damaged bases. Has a preference for oxidized purines, such as 7,8-dihydro-8-oxoguanine (8-oxoG). Has AP (apurinic/apyrimidinic) lyase activity and introduces nicks in the DNA strand. Cleaves the DNA backbone by beta-delta elimination to generate a single-strand break at the site of the removed base with both 3'- and 5'-phosphates. The chain is Formamidopyrimidine-DNA glycosylase from Geobacter metallireducens (strain ATCC 53774 / DSM 7210 / GS-15).